A 367-amino-acid chain; its full sequence is Nociceptin receptor (367 aa).

The Extracellular portion of the chain corresponds to 1 to 45 (MESLFPAPYWEVLYGSHFQGNLSLLNETVPHHLLLNASHSAFLPL). Residues N21, N26, and N36 are each glycosylated (N-linked (GlcNAc...) asparagine). A helical transmembrane segment spans residues 46–71 (GLKVTIVGLYLAVCIGGLLGNCLVMY). Topologically, residues 72-84 (VILRHTKMKTATN) are cytoplasmic. A helical transmembrane segment spans residues 85–106 (IYIFNLALADTLVLLTLPFQGT). The Extracellular portion of the chain corresponds to 107-121 (DILLGFWPFGNALCK). Cysteines 120 and 197 form a disulfide. Residues 122-143 (TVIAIDYYNMFTSTFTLTAMSV) form a helical membrane-spanning segment. Residues 144–162 (DRYVAICHPIRALDVRTSS) lie on the Cytoplasmic side of the membrane. The helical transmembrane segment at 163–185 (KAQAVNVAIWALASVVGVPVAIM) threads the bilayer. Residues 186–208 (GSAQVEDEEIECLVEIPAPQDYW) lie on the Extracellular side of the membrane. The helical transmembrane segment at 209–233 (GPVFAICIFLFSFIIPVLIISVCYS) threads the bilayer. The Cytoplasmic segment spans residues 234 to 261 (LMIRRLRGVRLLSGSREKDRNLRRITRL). Residues 262 to 282 (VLVVVAVFVGCWTPVQVFVLV) form a helical membrane-spanning segment. Over 283–297 (QGLGVQPGSETAVAI) the chain is Extracellular. The helical transmembrane segment at 298–319 (LRFCTALGYVNSCLNPILYAFL) threads the bilayer. The Cytoplasmic segment spans residues 320-367 (DENFKACFRKFCCASSLHREMQVSDRVRSIAKDVGLGCKTSETVPRPA). A lipid anchor (S-palmitoyl cysteine) is attached at C331.

The protein belongs to the G-protein coupled receptor 1 family. Phosphorylation at Ser-360 requires GRK3. Highly expressed in several brain areas, the intestine, liver and spleen. Detected in sympathetic stellate ganglion neurons.

Its subcellular location is the cell membrane. The protein localises to the cytoplasmic vesicle. G-protein coupled opioid receptor that functions as a receptor for the endogenous neuropeptide nociceptin. Ligand binding causes a conformation change that triggers signaling via guanine nucleotide-binding proteins (G proteins) and modulates the activity of down-stream effectors. Signaling via G proteins mediates inhibition of adenylate cyclase activity and calcium channel activity. Arrestins modulate signaling via G proteins and mediate the activation of alternative signaling pathways that lead to the activation of MAP kinases. Plays a role in modulating nociception and the perception of pain. Plays a role in the regulation of locomotor activity by the neuropeptide nociceptin. In Rattus norvegicus (Rat), this protein is Nociceptin receptor (Oprl1).